The chain runs to 125 residues: Fluoride-specific ion channel FluC (125 aa).

Transmembrane regions (helical) follow at residues methionine 1 to valine 21, alanine 32 to alanine 52, leucine 68 to isoleucine 88, and isoleucine 101 to methionine 121. 2 residues coordinate Na(+): glycine 75 and threonine 78.

It belongs to the fluoride channel Fluc/FEX (TC 1.A.43) family.

The protein localises to the cell inner membrane. It carries out the reaction fluoride(in) = fluoride(out). Its activity is regulated as follows. Na(+) is not transported, but it plays an essential structural role and its presence is essential for fluoride channel function. Fluoride-specific ion channel. Important for reducing fluoride concentration in the cell, thus reducing its toxicity. In Rhizobium etli (strain CIAT 652), this protein is Fluoride-specific ion channel FluC.